The sequence spans 697 residues: Polyribonucleotide nucleotidyltransferase (697 aa).

Positions 486 and 492 each coordinate Mg(2+). The KH domain occupies 553–612; the sequence is PRIHTIKIHPDKIKDVIGKCGSVIRALTEETKTIIDIEDDGTVTVAATDSIKAQQAICRI. The 69-residue stretch at 622-690 folds into the S1 motif domain; that stretch reads GSIYHGKVTR…RQGRIRLSMK (69 aa).

This sequence belongs to the polyribonucleotide nucleotidyltransferase family. As to quaternary structure, component of the RNA degradosome, which is a multiprotein complex involved in RNA processing and mRNA degradation. Requires Mg(2+) as cofactor.

The protein resides in the cytoplasm. It carries out the reaction RNA(n+1) + phosphate = RNA(n) + a ribonucleoside 5'-diphosphate. Its function is as follows. Involved in mRNA degradation. Catalyzes the phosphorolysis of single-stranded polyribonucleotides processively in the 3'- to 5'-direction. In Baumannia cicadellinicola subsp. Homalodisca coagulata, this protein is Polyribonucleotide nucleotidyltransferase.